Here is a 373-residue protein sequence, read N- to C-terminus: Alanine racemase (373 aa).

Lysine 40 serves as the catalytic Proton acceptor; specific for D-alanine. At lysine 40 the chain carries N6-(pyridoxal phosphate)lysine. A substrate-binding site is contributed by arginine 140. The Proton acceptor; specific for L-alanine role is filled by tyrosine 268. Methionine 315 contributes to the substrate binding site.

Belongs to the alanine racemase family. Pyridoxal 5'-phosphate serves as cofactor.

It catalyses the reaction L-alanine = D-alanine. It functions in the pathway amino-acid biosynthesis; D-alanine biosynthesis; D-alanine from L-alanine: step 1/1. Catalyzes the interconversion of L-alanine and D-alanine. May also act on other amino acids. This chain is Alanine racemase (alr), found in Limosilactobacillus fermentum (strain NBRC 3956 / LMG 18251) (Lactobacillus fermentum).